A 109-amino-acid chain; its full sequence is Nucleoid-associated protein Sbal223_1770 (109 aa).

The protein belongs to the YbaB/EbfC family. In terms of assembly, homodimer.

Its subcellular location is the cytoplasm. The protein localises to the nucleoid. Functionally, binds to DNA and alters its conformation. May be involved in regulation of gene expression, nucleoid organization and DNA protection. This chain is Nucleoid-associated protein Sbal223_1770, found in Shewanella baltica (strain OS223).